A 1182-amino-acid polypeptide reads, in one-letter code: Exocyst complex component 4 (1182 aa).

Residues 236 to 250 (NKNSNSNNSNNTFKS) are compositionally biased toward low complexity. Disordered stretches follow at residues 236 to 262 (NKNS…PFKP), 376 to 427 (IPKM…SSNI), 525 to 545 (EETE…PKPT), and 921 to 968 (QQQQ…GSNN). Over residues 392–409 (GSNGGGNNSMNGSGGING) the composition is skewed to gly residues. A compositionally biased stretch (low complexity) spans 410-426 (NGSTASSSSPTSSTSSN). Over residues 921–932 (QQQQQQQQQQQQ) the composition is skewed to low complexity. Positions 933 to 968 (VDSIKTPSKLNSGINSGGNSTASNKENNSTTTGSNN) are enriched in polar residues.

The protein belongs to the SEC8 family. In terms of assembly, the exocyst complex is composed of sec3/exoc1, sec5/exoc2, sec6/exoc3, sec8/exoc4, sec10/exoc5, sec15/exoc6, exo70/exoc7 and exo84/exoc8.

Its subcellular location is the midbody. The protein localises to the midbody ring. It is found in the cell projection. It localises to the cytoplasm. The protein resides in the cytoskeleton. Its subcellular location is the microtubule organizing center. The protein localises to the centrosome. Functionally, component of the exocyst complex involved in the docking of exocytic vesicles with fusion sites on the plasma membrane. This is Exocyst complex component 4 (exoc4) from Dictyostelium discoideum (Social amoeba).